We begin with the raw amino-acid sequence, 156 residues long: 6,7-dimethyl-8-ribityllumazine synthase (156 aa).

Residues Phe-22, 57 to 59 (AYE), and 81 to 83 (TVI) each bind 5-amino-6-(D-ribitylamino)uracil. 86-87 (GT) contributes to the (2S)-2-hydroxy-3-oxobutyl phosphate binding site. His-89 (proton donor) is an active-site residue. Position 114 (Phe-114) interacts with 5-amino-6-(D-ribitylamino)uracil. Residue Arg-128 participates in (2S)-2-hydroxy-3-oxobutyl phosphate binding.

This sequence belongs to the DMRL synthase family. In terms of assembly, forms an icosahedral capsid composed of 60 subunits, arranged as a dodecamer of pentamers.

The enzyme catalyses (2S)-2-hydroxy-3-oxobutyl phosphate + 5-amino-6-(D-ribitylamino)uracil = 6,7-dimethyl-8-(1-D-ribityl)lumazine + phosphate + 2 H2O + H(+). It functions in the pathway cofactor biosynthesis; riboflavin biosynthesis; riboflavin from 2-hydroxy-3-oxobutyl phosphate and 5-amino-6-(D-ribitylamino)uracil: step 1/2. In terms of biological role, catalyzes the formation of 6,7-dimethyl-8-ribityllumazine by condensation of 5-amino-6-(D-ribitylamino)uracil with 3,4-dihydroxy-2-butanone 4-phosphate. This is the penultimate step in the biosynthesis of riboflavin. In Photorhabdus laumondii subsp. laumondii (strain DSM 15139 / CIP 105565 / TT01) (Photorhabdus luminescens subsp. laumondii), this protein is 6,7-dimethyl-8-ribityllumazine synthase.